The chain runs to 1047 residues: Ubiquitin carboxyl-terminal hydrolase 28 (1047 aa).

Disordered stretches follow at residues 60-95 (DQEPVQNTAAAEPSSWEGSAVGKEPPQGGAAFDPEK) and 110-138 (SPKAHAAERPQEVHSPEHKNRSKRKRCEV). Residues 94 to 113 (EKKGDVHSAVAYGQLESPKA) enclose the UIM domain. Over residues 111 to 128 (PKAHAAERPQEVHSPEHK) the composition is skewed to basic and acidic residues. The 496-residue stretch at 156-651 (VGMKNIGNTC…SAYCLMYISD (496 aa)) folds into the USP domain. The active-site Nucleophile is cysteine 165. Residues 461–486 (STEDSQMMDRQSQGESLILGTPSQPD) show a composition bias toward polar residues. A disordered region spans residues 461–528 (STEDSQMMDR…SEPPAEMSDC (68 aa)). Residues 489-498 (LDGKDGKPED) show a composition bias toward basic and acidic residues. Residues 504-516 (ANSSPQQQLNAPL) show a composition bias toward polar residues. The active-site Proton acceptor is histidine 601. The tract at residues 694–735 (EAEEWEEEQSCKIPSTASESQELSPESGLDPPAAHEQSLRSL) is disordered. A compositionally biased stretch (polar residues) spans 705–717 (KIPSTASESQELS).

It belongs to the peptidase C19 family. USP28 subfamily.

The protein localises to the nucleus. It is found in the nucleoplasm. It carries out the reaction Thiol-dependent hydrolysis of ester, thioester, amide, peptide and isopeptide bonds formed by the C-terminal Gly of ubiquitin (a 76-residue protein attached to proteins as an intracellular targeting signal).. Deubiquitinase involved in DNA damage response checkpoint and MYC proto-oncogene stability. Involved in DNA damage induced apoptosis by specifically deubiquitinating proteins of the DNA damage pathway such as CLSPN. Also involved in G2 DNA damage checkpoint, by deubiquitinating CLSPN, and preventing its degradation by the anaphase promoting complex/cyclosome (APC/C). Specifically deubiquitinates MYC in the nucleoplasm, leading to prevent MYC degradation by the proteasome. Deubiquitinates ZNF304, hence may prevent ZNF304 degradation by the proteasome, leading to the activated KRAS-mediated promoter hypermethylation and transcriptional silencing of tumor suppressor genes (TSGs). In Gallus gallus (Chicken), this protein is Ubiquitin carboxyl-terminal hydrolase 28 (USP28).